Consider the following 343-residue polypeptide: uncharacterized protein (343 aa).

This is an uncharacterized protein from Nostoc sp. (strain PCC 7120 / SAG 25.82 / UTEX 2576).